Here is a 153-residue protein sequence, read N- to C-terminus: 3-hydroxyacyl-[acyl-carrier-protein] dehydratase FabZ (153 aa).

The active site involves H54.

Belongs to the thioester dehydratase family. FabZ subfamily.

It localises to the cytoplasm. The catalysed reaction is a (3R)-hydroxyacyl-[ACP] = a (2E)-enoyl-[ACP] + H2O. Its function is as follows. Involved in unsaturated fatty acids biosynthesis. Catalyzes the dehydration of short chain beta-hydroxyacyl-ACPs and long chain saturated and unsaturated beta-hydroxyacyl-ACPs. The protein is 3-hydroxyacyl-[acyl-carrier-protein] dehydratase FabZ of Shewanella loihica (strain ATCC BAA-1088 / PV-4).